The following is an 887-amino-acid chain: Alanine--tRNA ligase (887 aa).

The Zn(2+) site is built by histidine 581, histidine 585, cysteine 683, and histidine 687.

Belongs to the class-II aminoacyl-tRNA synthetase family. Zn(2+) serves as cofactor.

It localises to the cytoplasm. It carries out the reaction tRNA(Ala) + L-alanine + ATP = L-alanyl-tRNA(Ala) + AMP + diphosphate. Catalyzes the attachment of alanine to tRNA(Ala) in a two-step reaction: alanine is first activated by ATP to form Ala-AMP and then transferred to the acceptor end of tRNA(Ala). Also edits incorrectly charged Ser-tRNA(Ala) and Gly-tRNA(Ala) via its editing domain. This Ehrlichia ruminantium (strain Gardel) protein is Alanine--tRNA ligase.